The primary structure comprises 180 residues: Inner membrane-spanning protein YciB (180 aa).

The next 5 membrane-spanning stretches (helical) occupy residues 22–42, 50–70, 72–92, 121–141, and 149–169; these read IFVA…FTWL, MTLV…AFHS, LFIK…LLVS, LSWA…AFWL, and FKVF…GVYI.

Belongs to the YciB family.

The protein localises to the cell inner membrane. Its function is as follows. Plays a role in cell envelope biogenesis, maintenance of cell envelope integrity and membrane homeostasis. This Yersinia pseudotuberculosis serotype O:1b (strain IP 31758) protein is Inner membrane-spanning protein YciB.